The sequence spans 980 residues: Protein translocase subunit SecA (980 aa).

Residues Gln-109, 127-131 (GEGKT), and Asp-529 each bind ATP. The interval 954–980 (QKIGRNDPCPCGSGKKYKHCHGKDNPQ) is disordered. Cys-962, Cys-964, Cys-973, and His-974 together coordinate Zn(2+).

This sequence belongs to the SecA family. As to quaternary structure, monomer and homodimer. Part of the essential Sec protein translocation apparatus which comprises SecA, SecYEG and auxiliary proteins SecDF. Other proteins may also be involved. Zn(2+) is required as a cofactor.

The protein resides in the cell inner membrane. Its subcellular location is the cytoplasm. It carries out the reaction ATP + H2O + cellular proteinSide 1 = ADP + phosphate + cellular proteinSide 2.. Functionally, part of the Sec protein translocase complex. Interacts with the SecYEG preprotein conducting channel. Has a central role in coupling the hydrolysis of ATP to the transfer of proteins into and across the cell membrane, serving as an ATP-driven molecular motor driving the stepwise translocation of polypeptide chains across the membrane. The sequence is that of Protein translocase subunit SecA from Brachyspira hyodysenteriae (strain ATCC 49526 / WA1).